Reading from the N-terminus, the 151-residue chain is Arginine repressor (151 aa).

Belongs to the ArgR family.

It is found in the cytoplasm. The protein operates within amino-acid biosynthesis; L-arginine biosynthesis [regulation]. In terms of biological role, regulates arginine biosynthesis genes. The chain is Arginine repressor from Clostridium novyi (strain NT).